Reading from the N-terminus, the 115-residue chain is Toxin CSTX-9 (115 aa).

Residues 1–20 form the signal peptide; it reads MKVLVICAVLFLAIFSNSSA. A propeptide spanning residues 21–47 is cleaved from the precursor; sequence ETEDDFLEDESFEADDVIPFLAREQVR. Intrachain disulfides connect Cys53–Cys68, Cys60–Cys77, Cys67–Cys95, and Cys79–Cys93.

Belongs to the neurotoxin 19 (CSTX) family. In terms of assembly, monomer. Interacts with CSTX-13 (AC P83919) (Kd=370 nM), but does not interact with CSTX-1 (AC P81694). As to expression, expressed by the venom gland.

Its subcellular location is the secreted. The protein localises to the target cell membrane. Synergistic toxin that induces or increases a cytolytic effect when combined with CSTX-1 (AC P81694) or CSTX-13 (AC P83919). Potassium ions and M-ctenitoxin-Cs1a (AC P83619) have also an effect on its activity. When alone, has no insecticidal activity. The chain is Toxin CSTX-9 from Cupiennius salei (American wandering spider).